The primary structure comprises 515 residues: Cytochrome P450 monooxygenase paxP (515 aa).

The helical transmembrane segment at 20–36 (SLLWKLGVFAVLVYFLL) threads the bilayer. Cysteine 456 is a heme binding site.

It belongs to the cytochrome P450 family. Heme serves as cofactor.

It is found in the membrane. Its pathway is secondary metabolite biosynthesis. In terms of biological role, cytochrome P450 monooxygenase; part of the ATM2 gene cluster that mediates the biosynthesis of paxilline, a mycotoxin that acts as an inhibitor of mammalian maxi-K channels. PaxG, the geranylgeranyl diphosphate (GGPP) synthase is proposed to catalyze the first step in paxilline biosynthesis. Condensation of indole-3-glycerol phosphate with GGPP by paxC then forms 3-geranylgeranylindole (3-GGI), followed by epoxidation and cyclization of this intermediate (by paxM and paxB) to form paspaline. Paspaline is subsequently converted to 13-desoxypaxilline by paxP, the latter being then converted to paxilline by paxQ. Finally paxilline can be mono- and di-prenylated by paxD. PaxP can also utilized beta-paxitriol and alpha-PC-M6 as substrates converting them to paxilline. This Penicillium paxilli protein is Cytochrome P450 monooxygenase paxP.